The sequence spans 91 residues: Small ribosomal subunit protein bS16c (91 aa).

Belongs to the bacterial ribosomal protein bS16 family.

The protein localises to the plastid. Its subcellular location is the chloroplast. The protein is Small ribosomal subunit protein bS16c of Vitis vinifera (Grape).